Reading from the N-terminus, the 1002-residue chain is TOG array regulator of axonemal microtubules protein 2 (1002 aa).

Disordered regions lie at residues 54 to 74 (SSVL…EDQS), 131 to 214 (KRRL…SAQE), 332 to 351 (ETRS…KVQV), 402 to 421 (PLRG…PRRN), and 426 to 450 (LQRK…GFAR).

This sequence belongs to the Crescerin family.

The polypeptide is TOG array regulator of axonemal microtubules protein 2 (Togaram2) (Mus musculus (Mouse)).